The chain runs to 520 residues: MSIPKSCEVLVAGGGPAGSYAASALAREGVDVVLLEADKHPRYHIGESMLPSIRPLLRFIDLEETFEKHGFQKKLGAAFKLTAKREGYTDFVAAHGPNGYSWNVVRSESDELLFKHAAKSGALTFQGVKVDSLEFEPYDSDFPSGGKVANPGRPVAARWSAKDGRSGTISFQYLVDATGRAGITSTKYLKNRKFNEGLKNLAIWGYYKGARPWAEGTPRENQPYFEGMRDGAGWCWTIPLHNGTVSVGAVLRSDLFFAKKKSLGEDVTNAMIMAECMKLCPTIKELLEPAELVSDIKQATDYSYSASAYAGPYFRIVGDAGCFIDPFFSSGHHLAMAGALAAAVSIRASMKGDCSEYEASNWHARKVDEGYTLFLLVVMAALKQIRMQEEPVLSDIDDDGFDRAFQFLKPVIQGSGSAEIVKRFTKKEVSEAIDFAVLALDNMAGAGEHANETNGSNGTGETNGDAKTLENITVEDEKVLSGIRILAKVAPSADMKDLEGTAIDGFMPRLEHGHLGLNRV.

The FAD site is built by Gly14, Ala17, and Glu47. Residues Ser330 and Gly331 each coordinate chloride.

This sequence belongs to the flavin-dependent halogenase family.

Its pathway is secondary metabolite biosynthesis. Its function is as follows. Non-heme halogenase; part of the gene cluster that mediates the biosynthesis of radicicol, a resorcylic acid lactone (RAL) that irreversibly inhibits the HSP90 molecular chaperone, an important target for cancer chemotherapy. The cluster encodes only two apparent post-PKS enzymes, a cytochrome P450 monooxygenase (radP) and a non-heme halogenase (radH) that introduce the epoxide and the chlorine, respectively. If this cluster includes all the genes required for radicicol biosynthesis, the remaining structural features of radicicol are presumably generated by the PKSs rads1 and rads2. The C-2' ketone could arise if the R-PKS rads1 and NR-PKS rads2 each carry out four iterations, in contrast to the five iteration-three iteration split for the hypothemycin PKSs. The origin of the cis 5',6' double bond is not known. The radicicol R-PKS rads1 ER domain may catalyze either double bond isomerization or reduction in the third iteration. This chain is Flavin-dependent halogenase radH, found in Floropilus chiversii (Chaetomium chiversii).